The primary structure comprises 301 residues: Heat shock factor protein HSF24 (301 aa).

The DNA-binding element occupies 7–101 (PAPFLLKTYQ…LLTAIRRRKT (95 aa)). Disordered stretches follow at residues 103 to 160 (TSTP…DENE) and 221 to 244 (GVKD…DEKG). The span at 107–142 (AGGKSVAAGASASPDNSGDDIGSSSTSSPDSKNPGS) shows a compositional bias: low complexity. Acidic residues predominate over residues 233-243 (DNDDKEDDDEK).

The protein belongs to the HSF family. In terms of assembly, homotrimer. Post-translationally, exhibits temperature-dependent phosphorylation.

Its subcellular location is the nucleus. DNA-binding protein that specifically binds heat shock promoter elements (HSE) and activates transcription. The protein is Heat shock factor protein HSF24 (HSF24) of Solanum peruvianum (Peruvian tomato).